Here is a 211-residue protein sequence, read N- to C-terminus: Small ribosomal subunit protein uS3 (211 aa).

The KH type-2 domain maps to 38-106 (LRNFLKKRLY…EVYLNIQEVR (69 aa)).

It belongs to the universal ribosomal protein uS3 family. As to quaternary structure, part of the 30S ribosomal subunit. Forms a tight complex with proteins S10 and S14.

In terms of biological role, binds the lower part of the 30S subunit head. Binds mRNA in the 70S ribosome, positioning it for translation. In Citrifermentans bemidjiense (strain ATCC BAA-1014 / DSM 16622 / JCM 12645 / Bem) (Geobacter bemidjiensis), this protein is Small ribosomal subunit protein uS3.